We begin with the raw amino-acid sequence, 185 residues long: Elongation factor P (185 aa).

It belongs to the elongation factor P family.

Its subcellular location is the cytoplasm. It functions in the pathway protein biosynthesis; polypeptide chain elongation. Its function is as follows. Involved in peptide bond synthesis. Stimulates efficient translation and peptide-bond synthesis on native or reconstituted 70S ribosomes in vitro. Probably functions indirectly by altering the affinity of the ribosome for aminoacyl-tRNA, thus increasing their reactivity as acceptors for peptidyl transferase. The protein is Elongation factor P of Rippkaea orientalis (strain PCC 8801 / RF-1) (Cyanothece sp. (strain PCC 8801)).